A 380-amino-acid polypeptide reads, in one-letter code: Putative S-(hydroxymethyl)glutathione dehydrogenase 2 (380 aa).

C50 provides a ligand contact to Zn(2+). NAD(+) is bound at residue H51. Zn(2+) is bound by residues H72, E73, C102, C105, C108, C116, and C179. Residues 204–209 (GLGSVG), D228, and 297–299 (IGV) each bind NAD(+).

It belongs to the zinc-containing alcohol dehydrogenase family. Class-III subfamily. Zn(2+) is required as a cofactor.

The enzyme catalyses a primary alcohol + NAD(+) = an aldehyde + NADH + H(+). It carries out the reaction a secondary alcohol + NAD(+) = a ketone + NADH + H(+). It catalyses the reaction S-(hydroxymethyl)glutathione + NADP(+) = S-formylglutathione + NADPH + H(+). The catalysed reaction is S-(hydroxymethyl)glutathione + NAD(+) = S-formylglutathione + NADH + H(+). The enzyme catalyses S-nitrosoglutathione + NADH + H(+) = S-(hydroxysulfenamide)glutathione + NAD(+). Oxidizes long-chain alcohols and, in the presence of glutathione, is able to oxidize formaldehyde. Also acts as a S-nitroso-glutathione reductase by catalyzing the NADH-dependent reduction of S-nitrosoglutathione, thereby regulating protein S-nitrosylation. This is Putative S-(hydroxymethyl)glutathione dehydrogenase 2 from Schizosaccharomyces pombe (strain 972 / ATCC 24843) (Fission yeast).